Consider the following 304-residue polypeptide: MPQKDLLETIIEQVRPLLGKGKVADYIPALAEVDPTKLGIAVTTIDGQTIGAGDYLEPFSIQSISKVFSLTVALTLYEEAEIWSRVGKEPSGQSFNSLVQIELERGVPRNPFINAGALIIADLLQSRLGAPKHRMLEVVRKLSANPHVIYDKRVAASEYEHSARNAAIAYLMKSFGNFNNDVDRVLRNYFHYCALKMSCADLSKAMLYLANRGQSLSAEQVVSPIQTRKLNALLATSGLYDGAGEFAYRVGMPGKSGVGGGIIAVIPGDMSICVWSPELDKNGNSLAGTAALEKLSQALGRSIF.

The substrate site is built by Ser63, Asn114, Glu158, Asn165, Tyr189, Tyr240, and Val258.

This sequence belongs to the glutaminase family. As to quaternary structure, homotetramer.

The enzyme catalyses L-glutamine + H2O = L-glutamate + NH4(+). The protein is Glutaminase of Shewanella loihica (strain ATCC BAA-1088 / PV-4).